A 152-amino-acid chain; its full sequence is 17.1 kDa class II heat shock protein (152 aa).

One can recognise a sHSP domain in the interval Asp36–Ala152.

This sequence belongs to the small heat shock protein (HSP20) family.

It is found in the cytoplasm. The sequence is that of 17.1 kDa class II heat shock protein (HSP17.7) from Pisum sativum (Garden pea).